Consider the following 432-residue polypeptide: Glutamate-1-semialdehyde 2,1-aminomutase (432 aa).

Lys272 carries the N6-(pyridoxal phosphate)lysine modification.

The protein belongs to the class-III pyridoxal-phosphate-dependent aminotransferase family. HemL subfamily. As to quaternary structure, homodimer. It depends on pyridoxal 5'-phosphate as a cofactor.

It localises to the cytoplasm. It catalyses the reaction (S)-4-amino-5-oxopentanoate = 5-aminolevulinate. The protein operates within porphyrin-containing compound metabolism; protoporphyrin-IX biosynthesis; 5-aminolevulinate from L-glutamyl-tRNA(Glu): step 2/2. It participates in porphyrin-containing compound metabolism; chlorophyll biosynthesis. In Nostoc sp. (strain PCC 7120 / SAG 25.82 / UTEX 2576), this protein is Glutamate-1-semialdehyde 2,1-aminomutase.